We begin with the raw amino-acid sequence, 443 residues long: Ribosomal protein uS12 methylthiotransferase RimO (443 aa).

Residues 5–116 form the MTTase N-terminal domain; it reads PTIAINHLGC…IVDIIRRTEQ (112 aa). Residues Cys14, Cys50, Cys79, Cys154, Cys158, and Cys161 each contribute to the [4Fe-4S] cluster site. Residues 140–369 form the Radical SAM core domain; that stretch reads TTNEAIAYLR…MALQQPISAQ (230 aa). In terms of domain architecture, TRAM spans 372-438; sequence AACLGQTLDV…DYDLYGMTAE (67 aa).

It belongs to the methylthiotransferase family. RimO subfamily. [4Fe-4S] cluster is required as a cofactor.

The protein localises to the cytoplasm. It carries out the reaction L-aspartate(89)-[ribosomal protein uS12]-hydrogen + (sulfur carrier)-SH + AH2 + 2 S-adenosyl-L-methionine = 3-methylsulfanyl-L-aspartate(89)-[ribosomal protein uS12]-hydrogen + (sulfur carrier)-H + 5'-deoxyadenosine + L-methionine + A + S-adenosyl-L-homocysteine + 2 H(+). Functionally, catalyzes the methylthiolation of an aspartic acid residue of ribosomal protein uS12. This Synechocystis sp. (strain ATCC 27184 / PCC 6803 / Kazusa) protein is Ribosomal protein uS12 methylthiotransferase RimO.